Reading from the N-terminus, the 183-residue chain is Adenine phosphoribosyltransferase 3 (183 aa).

Belongs to the purine/pyrimidine phosphoribosyltransferase family. As to quaternary structure, homodimer.

Its subcellular location is the cytoplasm. The enzyme catalyses AMP + diphosphate = 5-phospho-alpha-D-ribose 1-diphosphate + adenine. Its pathway is purine metabolism; AMP biosynthesis via salvage pathway; AMP from adenine: step 1/1. Functionally, catalyzes a salvage reaction resulting in the formation of AMP, that is energically less costly than de novo synthesis. May contribute to the recycling of adenine into adenylate nucleotides and the inactivation of cytokinins by phosphoribosylation. Possesses low activity toward adenine and cytokinins. This chain is Adenine phosphoribosyltransferase 3 (APT3), found in Arabidopsis thaliana (Mouse-ear cress).